The chain runs to 637 residues: Biosynthetic arginine decarboxylase (637 aa).

K110 carries the N6-(pyridoxal phosphate)lysine modification. 290–300 (IDVGGGLGVDY) contributes to the substrate binding site.

Belongs to the Orn/Lys/Arg decarboxylase class-II family. SpeA subfamily. Requires Mg(2+) as cofactor. Pyridoxal 5'-phosphate is required as a cofactor.

It catalyses the reaction L-arginine + H(+) = agmatine + CO2. Its function is as follows. Catalyzes the biosynthesis of agmatine from arginine. The protein is Biosynthetic arginine decarboxylase of Pseudomonas putida (strain ATCC 47054 / DSM 6125 / CFBP 8728 / NCIMB 11950 / KT2440).